We begin with the raw amino-acid sequence, 469 residues long: Probable lysophospholipase BODYGUARD 1 (469 aa).

Residues 1 to 45 (MGFSRSLNRTVGVFVFFILDIVDFLLCFTYKTLDFFFESEWKPCY) form the signal peptide. The N-palmitoyl cysteine moiety is linked to residue Cys-46. The region spanning 185 to 439 (VVFIHGFLSS…IHVVPDKDHI (255 aa)) is the AB hydrolase-1 domain. The active site involves His-189. The active-site Nucleophile is Ser-263. Catalysis depends on charge relay system residues Asp-410 and His-438.

As to expression, expressed exclusively in protodermal and epidermal cells of all organs, especially on adaxial sides.

It is found in the cell membrane. The protein resides in the secreted. Its subcellular location is the cell wall. Its function is as follows. Controls cuticle development and morphogenesis, by promoting cutin and suberin monomers loading. Involved in the regulation of abscissic acid (ABA) biosynthesis in response to osmotic stress. Plays an important role in osmotic stress and drought resistance. Required to ensure a reduced permeability of aerial tissue, thus preventing transpiration. Regulates lateral root hair development. Required for infection by the pathogenic necrotrophic fungus Botrytis cinerea, probably by regulating structural traits of the cuticle. This Arabidopsis thaliana (Mouse-ear cress) protein is Probable lysophospholipase BODYGUARD 1.